The chain runs to 157 residues: Small ribosomal subunit protein uS7cz/uS7cy (157 aa).

It belongs to the universal ribosomal protein uS7 family. In terms of assembly, part of the 30S ribosomal subunit.

Its subcellular location is the plastid. It is found in the chloroplast. In terms of biological role, one of the primary rRNA binding proteins, it binds directly to 16S rRNA where it nucleates assembly of the head domain of the 30S subunit. This is Small ribosomal subunit protein uS7cz/uS7cy (rps7-A) from Welwitschia mirabilis (Tree tumbo).